The chain runs to 313 residues: Protoheme IX farnesyltransferase (313 aa).

Helical transmembrane passes span 34–54 (VIEL…RGTV), 56–76 (PLLI…ANTL), 105–125 (HALI…WWTT), 128–148 (LSAH…TLVL), 152–172 (TSQN…IGWS), 173–193 (AVTG…FFWT), 243–263 (LALA…TWFL), and 291–311 (YLAV…PTLF).

The protein belongs to the UbiA prenyltransferase family. Protoheme IX farnesyltransferase subfamily.

The protein resides in the cell membrane. The enzyme catalyses heme b + (2E,6E)-farnesyl diphosphate + H2O = Fe(II)-heme o + diphosphate. The protein operates within porphyrin-containing compound metabolism; heme O biosynthesis; heme O from protoheme: step 1/1. Functionally, converts heme B (protoheme IX) to heme O by substitution of the vinyl group on carbon 2 of heme B porphyrin ring with a hydroxyethyl farnesyl side group. This chain is Protoheme IX farnesyltransferase, found in Mycolicibacterium vanbaalenii (strain DSM 7251 / JCM 13017 / BCRC 16820 / KCTC 9966 / NRRL B-24157 / PYR-1) (Mycobacterium vanbaalenii).